Consider the following 119-residue polypeptide: Ribonuclease P protein component (119 aa).

This sequence belongs to the RnpA family. As to quaternary structure, consists of a catalytic RNA component (M1 or rnpB) and a protein subunit.

It catalyses the reaction Endonucleolytic cleavage of RNA, removing 5'-extranucleotides from tRNA precursor.. Its function is as follows. RNaseP catalyzes the removal of the 5'-leader sequence from pre-tRNA to produce the mature 5'-terminus. It can also cleave other RNA substrates such as 4.5S RNA. The protein component plays an auxiliary but essential role in vivo by binding to the 5'-leader sequence and broadening the substrate specificity of the ribozyme. This Escherichia coli O6:H1 (strain CFT073 / ATCC 700928 / UPEC) protein is Ribonuclease P protein component.